A 224-amino-acid polypeptide reads, in one-letter code: Germin-like protein 8-5 (224 aa).

Positions 1–22 (MASPSSLCLLAALALISWQAMA) are cleaved as a signal peptide. A disulfide bond links cysteine 32 and cysteine 47. The region spanning 62-212 (AKLDTPRKTN…AFQVEKGTID (151 aa)) is the Cupin type-1 domain. Asparagine 76 carries N-linked (GlcNAc...) asparagine glycosylation. Mn(2+) contacts are provided by histidine 109, histidine 111, and glutamate 116. Asparagine 135 carries N-linked (GlcNAc...) asparagine glycosylation. Residue histidine 157 coordinates Mn(2+).

It belongs to the germin family. As to quaternary structure, oligomer (believed to be a pentamer but probably hexamer).

The protein resides in the secreted. Its subcellular location is the extracellular space. The protein localises to the apoplast. Plays a role in broad-spectrum disease resistance. Probably has no oxalate oxidase activity even if the active site is conserved. The protein is Germin-like protein 8-5 of Oryza sativa subsp. japonica (Rice).